Here is a 133-residue protein sequence, read N- to C-terminus: DNA-directed RNA polymerases I and III subunit RPAC2 (133 aa).

Met-1 carries the N-acetylmethionine modification. The interval 1–22 is disordered; the sequence is MEEDQELERKMSGVKTSMAEGE.

Belongs to the archaeal Rpo11/eukaryotic RPB11/RPC19 RNA polymerase subunit family. Component of the RNA polymerase I and RNA polymerase III complexes consisting of at least 13 and 17 subunits, respectively. The transcriptionally active RNA polymerase III complex consists of a ten-subunit horseshoe-shaped catalytic core composed of POLR3A/RPC1, POLR3B/RPC2, POLR1C/RPAC1, POLR1D/RPAC2, POLR3K/RPC10, POLR2E/RPABC1, POLR2F/RPABC2, POLR2H/RPABC3, POLR2K/RPABC4 and POLR2L/RPABC5; a mobile stalk composed of two subunits POLR3H/RPC8 and CRCP/RPC9, protruding from the core and functioning primarily in transcription initiation; and additional subunits homologous to general transcription factors of the RNA polymerase II machinery, POLR3C/RPC3-POLR3F/RPC6-POLR3G/RPC7 heterotrimer required for transcription initiation and POLR3D/RPC4-POLR3E/RPC5 heterodimer involved in both transcription initiation and termination.

Its subcellular location is the nucleus. Its function is as follows. DNA-dependent RNA polymerase catalyzes the transcription of DNA into RNA using the four ribonucleoside triphosphates as substrates. Common component of RNA polymerases I and III which synthesize ribosomal RNA precursor pre-rRNA and short non-coding RNAs including 5S rRNA, snRNAs, tRNAs and miRNAs, respectively. This Bos taurus (Bovine) protein is DNA-directed RNA polymerases I and III subunit RPAC2 (POLR1D).